The primary structure comprises 225 residues: ATP synthase subunit a (225 aa).

The next 6 membrane-spanning stretches (helical) occupy residues 18 to 38 (LSLN…MFWL), 73 to 93 (ILIS…FPYI), 100 to 120 (MTLT…FGWI), 126 to 146 (MFTH…MVLI), 156 to 176 (GTLA…LTLL), and 187 to 207 (IMLF…AVAM).

This sequence belongs to the ATPase A chain family. As to quaternary structure, F-type ATPases have 2 components, CF(1) - the catalytic core - and CF(0) - the membrane proton channel. CF(1) has five subunits: alpha(3), beta(3), gamma(1), delta(1), epsilon(1). CF(0) has three main subunits: a, b and c.

The protein resides in the mitochondrion inner membrane. In terms of biological role, mitochondrial membrane ATP synthase (F(1)F(0) ATP synthase or Complex V) produces ATP from ADP in the presence of a proton gradient across the membrane which is generated by electron transport complexes of the respiratory chain. F-type ATPases consist of two structural domains, F(1) - containing the extramembraneous catalytic core and F(0) - containing the membrane proton channel, linked together by a central stalk and a peripheral stalk. During catalysis, ATP synthesis in the catalytic domain of F(1) is coupled via a rotary mechanism of the central stalk subunits to proton translocation. Key component of the proton channel; it may play a direct role in the translocation of protons across the membrane. In Locusta migratoria (Migratory locust), this protein is ATP synthase subunit a (ATP6).